The chain runs to 501 residues: Glucan endo-1,3-beta-glucosidase 3 (501 aa).

Positions 1–18 (MAALLLLFLFLFASSALS) are cleaved as a signal peptide. 2 N-linked (GlcNAc...) asparagine glycosylation sites follow: Asn-88 and Asn-107. Catalysis depends on Glu-116, which acts as the Proton donor. Asn-171 and Asn-253 each carry an N-linked (GlcNAc...) asparagine glycan. Glu-263 functions as the Nucleophile in the catalytic mechanism. N-linked (GlcNAc...) asparagine glycosylation is found at Asn-295, Asn-353, and Asn-357. Residues Cys-361 and Cys-424 are joined by a disulfide bond. N-linked (GlcNAc...) asparagine glycans are attached at residues Asn-451, Asn-456, Asn-457, and Asn-466. A lipid anchor (GPI-anchor amidated serine) is attached at Ser-470. The propeptide at 471 to 501 (GCIPKYYHHPHASFGDLTLLSLLLIIALVFL) is removed in mature form.

Belongs to the glycosyl hydrolase 17 family. In terms of processing, contains two additional disulfide bonds.

Its subcellular location is the cell membrane. It carries out the reaction Hydrolysis of (1-&gt;3)-beta-D-glucosidic linkages in (1-&gt;3)-beta-D-glucans.. This chain is Glucan endo-1,3-beta-glucosidase 3, found in Arabidopsis thaliana (Mouse-ear cress).